The sequence spans 111 residues: Resistin-like gamma (111 aa).

The N-terminal stretch at 1–23 (MKTAICSLLICIFLLQLMVPVNT) is a signal peptide. 5 disulfide bridges follow: cysteine 55–cysteine 108, cysteine 67–cysteine 107, cysteine 76–cysteine 93, cysteine 78–cysteine 95, and cysteine 82–cysteine 97.

Belongs to the resistin/FIZZ family. In terms of assembly, homodimer. Heterodimer with RETNLB. Highly expressed in bone marrow, spleen and white blood cells. Also detected at low levels in thymus, lung, trachea, white adipose tissue, nasal respiratory epithelium, colon, small intestine, kidney, liver, and heart.

The protein resides in the secreted. Functionally, probable hormone. Promotes chemotaxis in myeloid cells. This chain is Resistin-like gamma, found in Rattus norvegicus (Rat).